We begin with the raw amino-acid sequence, 146 residues long: Hemoglobin subunit beta (146 aa).

The Globin domain occupies 2-146 (HWTETERATI…VVAALSREYH (145 aa)). Heme b is bound by residues histidine 63 and histidine 92.

This sequence belongs to the globin family. As to quaternary structure, heterotetramer of two alpha chains and two beta chains (an easy dimerization is also reported). As to expression, red blood cells.

In terms of biological role, involved in oxygen transport from the lung to the various peripheral tissues. This Latimeria chalumnae (Coelacanth) protein is Hemoglobin subunit beta (HBB).